A 611-amino-acid polypeptide reads, in one-letter code: Protein halfway (611 aa).

The N-terminal stretch at 1-22 (MLAYTHGTWLLLLLLLVAGACA) is a signal peptide. Disordered stretches follow at residues 31 to 64 (DPAA…LKED), 90 to 132 (SLAE…AAPE), and 154 to 185 (GRAE…CQCR). The segment covering 43 to 59 (AHAHPQARHHHHAHPHA) has biased composition (basic residues). The span at 90-101 (SLAETQSMSDPG) shows a compositional bias: polar residues. Over residues 102–123 (SVTDTTSTSTSHSTSTTSTTSP) the composition is skewed to low complexity. Polar residues predominate over residues 159–183 (SEGQGSTVAQSEAQNRGGQGNSQCQ). N-linked (GlcNAc...) asparagine glycosylation is found at N221, N246, N264, and N269. LRR repeat units lie at residues 236–257 (SLQS…FPRL), 259–280 (ALKC…AVKD), 283–304 (HLEF…NQNK), and 313–334 (NMRM…NFLN). Residues 361–416 (ENRKRCVTNCPVIPNYGSCNCTLENIMIIQDNQSKPQCHVDCSNLGLVELPQRLPD) form the LRRNT domain. LRR repeat units lie at residues 417–438 (NTFM…FHTN), 443–464 (NINR…EGTK), and 468–489 (TFQR…FLNN). In terms of domain architecture, LRRCT spans 505-554 (NKLQCDCNSAKTLQNWLKERSSDIPDYMEIRCRNMPQRVIELQEAKLCQS).

In terms of biological role, has a role in the ecdysone induced cascade; probably indirect control of 'late' ecdysone genes. This Drosophila melanogaster (Fruit fly) protein is Protein halfway.